The following is a 150-amino-acid chain: Putative FAD-linked sulfhydryl oxidase 088R (150 aa).

Residues 24 to 128 form the ERV/ALR sulfhydryl oxidase domain; sequence GPFGPSGFGP…VTLQKAICIY (105 aa). Cys-74 and Cys-77 are joined by a disulfide.

FAD is required as a cofactor.

The catalysed reaction is 2 R'C(R)SH + O2 = R'C(R)S-S(R)CR' + H2O2. Functionally, FAD-dependent sulfhydryl oxidase that catalyzes disulfide bond formation. This Dryophytes versicolor (chameleon treefrog) protein is Putative FAD-linked sulfhydryl oxidase 088R.